The primary structure comprises 460 residues: ATP synthase subunit beta (460 aa).

150 to 157 (GGAGVGKT) is an ATP binding site.

The protein belongs to the ATPase alpha/beta chains family. In terms of assembly, F-type ATPases have 2 components, CF(1) - the catalytic core - and CF(0) - the membrane proton channel. CF(1) has five subunits: alpha(3), beta(3), gamma(1), delta(1), epsilon(1). CF(0) has three main subunits: a(1), b(2) and c(9-12). The alpha and beta chains form an alternating ring which encloses part of the gamma chain. CF(1) is attached to CF(0) by a central stalk formed by the gamma and epsilon chains, while a peripheral stalk is formed by the delta and b chains.

The protein resides in the cell inner membrane. It catalyses the reaction ATP + H2O + 4 H(+)(in) = ADP + phosphate + 5 H(+)(out). Produces ATP from ADP in the presence of a proton gradient across the membrane. The catalytic sites are hosted primarily by the beta subunits. This Serratia proteamaculans (strain 568) protein is ATP synthase subunit beta.